Here is a 434-residue protein sequence, read N- to C-terminus: Perilipin-3 (434 aa).

Residues 1–22 (MSADGAEADGSTQVTVEEPVQQ) form a disordered region. An N-acetylserine modification is found at Ser-2. Position 31 is a phosphoserine (Ser-31). Residue Lys-65 is modified to N6-acetyllysine. A Phosphoserine modification is found at Ser-91. Lys-122 participates in a covalent cross-link: Glycyl lysine isopeptide (Lys-Gly) (interchain with G-Cter in SUMO1). Residues Ser-130 and Ser-148 each carry the phosphoserine modification. Phosphothreonine is present on Thr-170. Ser-175 and Ser-179 each carry phosphoserine. A Phosphothreonine modification is found at Thr-216. Phosphoserine occurs at positions 217 and 241. At Tyr-251 the chain carries Phosphotyrosine. 2 coiled-coil regions span residues 252–277 (EHSL…QVLS) and 353–377 (TNVK…SSIH).

The protein belongs to the perilipin family. Homooligomer. Interacts with M6PR (via the cytoplasmic domain). Interacts with IGF2R (via the cytoplasmic domain). In terms of assembly, may exist as a homodimer. Post-translationally, phosphorylation at Tyr-251 by isoform 1 of CHKA (CHKalpha2) promotes dissociation from lipid droplets: dissociation is followed by recruitment of autophagosome machinery to lipid droplets and subsequent lipid droplet lipolysis.

It is found in the lipid droplet. Its subcellular location is the endosome membrane. It localises to the cytoplasm. Structural component of lipid droplets, which is required for the formation and maintenance of lipid storage droplets. Required for the transport of mannose 6-phosphate receptors (MPR) from endosomes to the trans-Golgi network. The chain is Perilipin-3 (PLIN3) from Homo sapiens (Human).